Consider the following 287-residue polypeptide: Probable endonuclease 4 (287 aa).

Residues His69, His109, Glu144, Asp178, His181, His215, Asp228, His230, and Glu260 each contribute to the Zn(2+) site.

This sequence belongs to the AP endonuclease 2 family. It depends on Zn(2+) as a cofactor.

The catalysed reaction is Endonucleolytic cleavage to 5'-phosphooligonucleotide end-products.. Its function is as follows. Endonuclease IV plays a role in DNA repair. It cleaves phosphodiester bonds at apurinic or apyrimidinic (AP) sites, generating a 3'-hydroxyl group and a 5'-terminal sugar phosphate. In Thermotoga maritima (strain ATCC 43589 / DSM 3109 / JCM 10099 / NBRC 100826 / MSB8), this protein is Probable endonuclease 4.